Consider the following 360-residue polypeptide: Phospho-N-acetylmuramoyl-pentapeptide-transferase (360 aa).

The next 10 membrane-spanning stretches (helical) occupy residues 21–41 (YITF…LWIG), 73–93 (TMGG…WADL), 98–118 (VWFV…DDYW), 132–152 (WKYF…YAIG), 168–188 (VMPQ…VGTS), 199–219 (GLAI…AWAT), 236–256 (SGEL…FLWF), 263–283 (VFMG…IAVL), 288–308 (LLLV…ILQV), and 338–358 (VIVR…VTLK).

This sequence belongs to the glycosyltransferase 4 family. MraY subfamily. It depends on Mg(2+) as a cofactor.

The protein localises to the cell inner membrane. The catalysed reaction is UDP-N-acetyl-alpha-D-muramoyl-L-alanyl-gamma-D-glutamyl-meso-2,6-diaminopimeloyl-D-alanyl-D-alanine + di-trans,octa-cis-undecaprenyl phosphate = di-trans,octa-cis-undecaprenyl diphospho-N-acetyl-alpha-D-muramoyl-L-alanyl-D-glutamyl-meso-2,6-diaminopimeloyl-D-alanyl-D-alanine + UMP. It participates in cell wall biogenesis; peptidoglycan biosynthesis. Its function is as follows. Catalyzes the initial step of the lipid cycle reactions in the biosynthesis of the cell wall peptidoglycan: transfers peptidoglycan precursor phospho-MurNAc-pentapeptide from UDP-MurNAc-pentapeptide onto the lipid carrier undecaprenyl phosphate, yielding undecaprenyl-pyrophosphoryl-MurNAc-pentapeptide, known as lipid I. The protein is Phospho-N-acetylmuramoyl-pentapeptide-transferase of Glaesserella parasuis serovar 5 (strain SH0165) (Haemophilus parasuis).